Consider the following 194-residue polypeptide: Probable GTP-binding protein EngB (194 aa).

The EngB-type G domain occupies 22–194 (DLPEYALAGR…AWQFIKEGME (173 aa)). GTP is bound by residues 30–37 (GRSNVGKS), 57–61 (GKTQT), 75–78 (DVPG), 142–145 (TKAD), and 174–176 (FSS). Ser37 and Thr59 together coordinate Mg(2+).

The protein belongs to the TRAFAC class TrmE-Era-EngA-EngB-Septin-like GTPase superfamily. EngB GTPase family. The cofactor is Mg(2+).

Functionally, necessary for normal cell division and for the maintenance of normal septation. The protein is Probable GTP-binding protein EngB of Listeria monocytogenes serotype 4b (strain CLIP80459).